A 469-amino-acid chain; its full sequence is Tetratricopeptide repeat protein 38 (469 aa).

A2 is subject to N-acetylalanine. The residue at position 5 (S5) is a Phosphoserine. TPR repeat units follow at residues 108-141 (REQL…HPTD), 180-213 (SYVK…NPTD), and 252-285 (CHNY…SLQA).

It belongs to the TTC38 family.

The protein is Tetratricopeptide repeat protein 38 (TTC38) of Homo sapiens (Human).